The chain runs to 714 residues: Polyribonucleotide nucleotidyltransferase (714 aa).

Residues D484 and D490 each contribute to the Mg(2+) site. A KH domain is found at P551 to I610. The 69-residue stretch at G620–K688 folds into the S1 motif domain. The segment at L685–K714 is disordered. Residues K693–K714 are compositionally biased toward basic and acidic residues.

This sequence belongs to the polyribonucleotide nucleotidyltransferase family. Mg(2+) serves as cofactor.

The protein resides in the cytoplasm. The enzyme catalyses RNA(n+1) + phosphate = RNA(n) + a ribonucleoside 5'-diphosphate. Involved in mRNA degradation. Catalyzes the phosphorolysis of single-stranded polyribonucleotides processively in the 3'- to 5'-direction. The sequence is that of Polyribonucleotide nucleotidyltransferase from Finegoldia magna (strain ATCC 29328 / DSM 20472 / WAL 2508) (Peptostreptococcus magnus).